We begin with the raw amino-acid sequence, 21 residues long: GMASKAGTIVGKIAKVALNAL.

Leu-21 is modified (leucine amide).

As to expression, expressed by the skin glands.

It is found in the secreted. In terms of biological role, antimicrobial peptide. In Xenopus ruwenzoriensis (Uganda clawed frog), this protein is Peptide PGLa-R3.